The sequence spans 396 residues: Elongation factor Tu (396 aa).

One can recognise a tr-type G domain in the interval 10-206; sequence KPHVNVGTIG…VLDTYIPEPE (197 aa). The interval 19–26 is G1; sequence GHVDHGKT. 19–26 contributes to the GTP binding site; that stretch reads GHVDHGKT. Mg(2+) is bound at residue Thr26. Positions 60–64 are G2; sequence GITIN. The interval 81-84 is G3; it reads DCPG. GTP contacts are provided by residues 81 to 85 and 136 to 139; these read DCPGH and NKCD. Residues 136–139 form a G4 region; that stretch reads NKCD. The segment at 174–176 is G5; the sequence is SAT.

It belongs to the TRAFAC class translation factor GTPase superfamily. Classic translation factor GTPase family. EF-Tu/EF-1A subfamily. Monomer.

It localises to the cytoplasm. The catalysed reaction is GTP + H2O = GDP + phosphate + H(+). Its function is as follows. GTP hydrolase that promotes the GTP-dependent binding of aminoacyl-tRNA to the A-site of ribosomes during protein biosynthesis. The chain is Elongation factor Tu from Psychrobacter arcticus (strain DSM 17307 / VKM B-2377 / 273-4).